Here is a 244-residue protein sequence, read N- to C-terminus: Putative lipoprotein LprA (244 aa).

A signal peptide spans 1 to 24 (MKHPPCSVVAAATAILAVVLAIGG). Residue C25 is the site of N-palmitoyl cysteine attachment. C25 is lipidated: S-diacylglycerol cysteine.

Belongs to the LppX/LprAFG lipoprotein family.

The protein resides in the cell membrane. The chain is Putative lipoprotein LprA (lprA) from Mycobacterium bovis (strain ATCC BAA-935 / AF2122/97).